The sequence spans 413 residues: Serine hydroxymethyltransferase (413 aa).

(6S)-5,6,7,8-tetrahydrofolate contacts are provided by residues Leu120 and 124 to 126; that span reads GHL. Lys228 is subject to N6-(pyridoxal phosphate)lysine.

It belongs to the SHMT family. As to quaternary structure, homodimer. The cofactor is pyridoxal 5'-phosphate.

Its subcellular location is the cytoplasm. The enzyme catalyses (6R)-5,10-methylene-5,6,7,8-tetrahydrofolate + glycine + H2O = (6S)-5,6,7,8-tetrahydrofolate + L-serine. It participates in one-carbon metabolism; tetrahydrofolate interconversion. It functions in the pathway amino-acid biosynthesis; glycine biosynthesis; glycine from L-serine: step 1/1. In terms of biological role, catalyzes the reversible interconversion of serine and glycine with tetrahydrofolate (THF) serving as the one-carbon carrier. This reaction serves as the major source of one-carbon groups required for the biosynthesis of purines, thymidylate, methionine, and other important biomolecules. Also exhibits THF-independent aldolase activity toward beta-hydroxyamino acids, producing glycine and aldehydes, via a retro-aldol mechanism. The polypeptide is Serine hydroxymethyltransferase (Agathobacter rectalis (strain ATCC 33656 / DSM 3377 / JCM 17463 / KCTC 5835 / VPI 0990) (Eubacterium rectale)).